Here is a 354-residue protein sequence, read N- to C-terminus: DNA-binding protein EMBP-1 (354 aa).

Disordered stretches follow at residues 1-24 (MASS…TPAQ), 106-193 (SAAG…RSAS), and 230-273 (EVNA…RKQQ). Low complexity-rich tracts occupy residues 127-140 (SSSG…QGSS) and 232-245 (NAAA…SLSQ). Over residues 246-265 (MDERELKRERRKQSNRESAR) the composition is skewed to basic and acidic residues. Residues 250–313 (ELKRERRKQS…KTMETENKKL (64 aa)) form the bZIP domain. The segment at 252-271 (KRERRKQSNRESARRSRLRK) is basic motif. The segment at 278–299 (LAQKVSELTAANGTLRSELDQL) is leucine-zipper.

Belongs to the bZIP family. As to quaternary structure, heterodimer.

The protein resides in the nucleus. Its function is as follows. Interacts specifically with the 8-bp sequence 5'-CACGTGGC-3'in the abscisic acid response element (ABARE). Also binds to the hexamer motif 5'-ACGTCA-3' of histone gene promoters. This Triticum aestivum (Wheat) protein is DNA-binding protein EMBP-1.